The sequence spans 950 residues: Double-stranded RNA-binding protein Staufen homolog (950 aa).

3 disordered regions span residues Val-25 to Gln-168, Gln-202 to Thr-274, and Val-288 to Glu-342. A compositionally biased stretch (low complexity) spans Gln-31–Ser-43. The span at Ala-45–Leu-66 shows a compositional bias: polar residues. A compositionally biased stretch (low complexity) spans Gln-67–Gln-77. Residues Leu-78–Thr-122 show a composition bias toward polar residues. Composition is skewed to low complexity over residues Gln-130–Gln-143, Gln-153–Gln-168, and Gln-202–His-253. Residues Ser-254 to Thr-274 are compositionally biased toward polar residues. A compositionally biased stretch (basic and acidic residues) spans Ser-313–Asp-322. DRBM domains lie at Thr-344–Cys-411, Thr-435–Asn-546, Ser-578–Lys-645, and Asn-690–Tyr-758. 2 disordered regions span residues Tyr-758–Ser-833 and Asp-922–Lys-950. The span at Pro-765–Asn-782 shows a compositional bias: polar residues. Basic and acidic residues predominate over residues Asp-922 to Leu-937.

In terms of tissue distribution, strongly expressed in nervous tissue (at protein level).

The protein resides in the perikaryon. Its subcellular location is the cell projection. In terms of biological role, RNA-binding protein which is required for syntaxin location in sensory neurons during long-term synaptic facilitation. Binds to syntaxin mRNA and is required to maintain its accumulation at the axon hillock following neuronal stimulation and at the opposite pole in stable unstimulated sensory neurons. The protein is Double-stranded RNA-binding protein Staufen homolog of Aplysia californica (California sea hare).